The primary structure comprises 317 residues: Ribosomal protein L11 methyltransferase (317 aa).

Positions 158, 179, 201, and 244 each coordinate S-adenosyl-L-methionine.

This sequence belongs to the methyltransferase superfamily. PrmA family.

The protein localises to the cytoplasm. It carries out the reaction L-lysyl-[protein] + 3 S-adenosyl-L-methionine = N(6),N(6),N(6)-trimethyl-L-lysyl-[protein] + 3 S-adenosyl-L-homocysteine + 3 H(+). Methylates ribosomal protein L11. This is Ribosomal protein L11 methyltransferase from Streptococcus pyogenes serotype M12 (strain MGAS2096).